The sequence spans 635 residues: Threonine--tRNA ligase (635 aa).

Residues Met1 to Thr61 enclose the TGS domain. A catalytic region spans residues Asp242 to Pro533. Cys333, His384, and His510 together coordinate Zn(2+).

It belongs to the class-II aminoacyl-tRNA synthetase family. In terms of assembly, homodimer. The cofactor is Zn(2+).

It localises to the cytoplasm. It carries out the reaction tRNA(Thr) + L-threonine + ATP = L-threonyl-tRNA(Thr) + AMP + diphosphate + H(+). Functionally, catalyzes the attachment of threonine to tRNA(Thr) in a two-step reaction: L-threonine is first activated by ATP to form Thr-AMP and then transferred to the acceptor end of tRNA(Thr). Also edits incorrectly charged L-seryl-tRNA(Thr). The protein is Threonine--tRNA ligase of Rickettsia rickettsii (strain Sheila Smith).